We begin with the raw amino-acid sequence, 633 residues long: Rab11 family-interacting protein 4 (633 aa).

EF-hand domains lie at 17–52 (LFLQRLRQVFDACDGDADGFIKVEHFVALGLQFAQG) and 50–85 (AQGDEVKKLAKRLDPNAQGRIGFKDFCHGVLAMKGC). Residues aspartate 30, aspartate 32, aspartate 34, aspartate 63, asparagine 65, arginine 69, and aspartate 74 each contribute to the Ca(2+) site. 2 disordered regions span residues 152-182 (SDLDSAMYSTPSSEASDEGRNEDKAGGLGSL) and 218-257 (GEGEDIDYSPGSPCPDDESRTNALSDLGSSVPSSAGQTPR). Residues 238-254 (TNALSDLGSSVPSSAGQ) show a composition bias toward polar residues. A coiled-coil region spans residues 410–613 (AREKGTEIVL…EEINYRLRQY (204 aa)). The FIP-RBD domain occupies 570–632 (EAKSLFSTQT…DHNPSILEIK (63 aa)).

Homodimer. Forms a complex with Rab11 (rab11a or rab11b) and arf6.

Its subcellular location is the recycling endosome membrane. The protein localises to the cleavage furrow. It is found in the midbody. The protein resides in the cytoplasmic vesicle. In terms of biological role, acts as a regulator of endocytic traffic by participating in membrane delivery. Required for the abscission step in cytokinesis, possibly by acting as an 'address tag' delivering recycling endosome membranes to the cleavage furrow during late cytokinesis. The sequence is that of Rab11 family-interacting protein 4 (rab11fip4) from Xenopus tropicalis (Western clawed frog).